The primary structure comprises 406 residues: Cysteine desulfurase (406 aa).

K226 carries the post-translational modification N6-(pyridoxal phosphate)lysine. C364 functions as the Cysteine persulfide intermediate in the catalytic mechanism.

Belongs to the class-V pyridoxal-phosphate-dependent aminotransferase family. Csd subfamily. In terms of assembly, homodimer. Interacts with SufE and the SufBCD complex composed of SufB, SufC and SufD. The interaction with SufE is required to mediate the direct transfer of the sulfur atom from the S-sulfanylcysteine. Pyridoxal 5'-phosphate serves as cofactor.

It localises to the cytoplasm. It catalyses the reaction (sulfur carrier)-H + L-cysteine = (sulfur carrier)-SH + L-alanine. The catalysed reaction is L-selenocysteine + AH2 = hydrogenselenide + L-alanine + A + H(+). The protein operates within cofactor biosynthesis; iron-sulfur cluster biosynthesis. Functionally, cysteine desulfurases mobilize the sulfur from L-cysteine to yield L-alanine, an essential step in sulfur metabolism for biosynthesis of a variety of sulfur-containing biomolecules. Component of the suf operon, which is activated and required under specific conditions such as oxidative stress and iron limitation. Acts as a potent selenocysteine lyase in vitro, that mobilizes selenium from L-selenocysteine. Selenocysteine lyase activity is however unsure in vivo. This Yersinia pseudotuberculosis serotype IB (strain PB1/+) protein is Cysteine desulfurase.